Here is a 414-residue protein sequence, read N- to C-terminus: Serine hydroxymethyltransferase (414 aa).

(6S)-5,6,7,8-tetrahydrofolate contacts are provided by residues Leu118 and 122 to 124 (GHL). The residue at position 226 (Lys226) is an N6-(pyridoxal phosphate)lysine. Residue 353–355 (SPF) participates in (6S)-5,6,7,8-tetrahydrofolate binding.

It belongs to the SHMT family. In terms of assembly, homodimer. Pyridoxal 5'-phosphate serves as cofactor.

Its subcellular location is the cytoplasm. It catalyses the reaction (6R)-5,10-methylene-5,6,7,8-tetrahydrofolate + glycine + H2O = (6S)-5,6,7,8-tetrahydrofolate + L-serine. It participates in one-carbon metabolism; tetrahydrofolate interconversion. Its pathway is amino-acid biosynthesis; glycine biosynthesis; glycine from L-serine: step 1/1. Catalyzes the reversible interconversion of serine and glycine with tetrahydrofolate (THF) serving as the one-carbon carrier. This reaction serves as the major source of one-carbon groups required for the biosynthesis of purines, thymidylate, methionine, and other important biomolecules. Also exhibits THF-independent aldolase activity toward beta-hydroxyamino acids, producing glycine and aldehydes, via a retro-aldol mechanism. The polypeptide is Serine hydroxymethyltransferase (Blochmanniella floridana).